Reading from the N-terminus, the 440-residue chain is Transposon Ty1-PR3 Gag polyprotein (440 aa).

Polar residues-rich tracts occupy residues 1 to 23 (MESQQLSNYSPISHGSACASVTS), 48 to 60 (TKANSQQTTTPAS), and 127 to 152 (QSQFPQYPSSVGTPLSTPSPESGNTF). 3 disordered regions span residues 1 to 93 (MESQ…MMTQ), 126 to 173 (PQSQ…RPPP), and 352 to 440 (GSRN…PGTY). Low complexity predominate over residues 153–165 (TDSSSADSDMTST). An RNA-binding region spans residues 299–401 (NNGIHINNKV…NSKSKTARAH (103 aa)). Over residues 402-418 (NVSTSNNSPSTDNDSIS) the composition is skewed to low complexity. At Ser416 the chain carries Phosphoserine. Residues 419–428 (KSTTEPIQLN) show a composition bias toward polar residues. Residues 429–440 (NKHDLHLRPGTY) are compositionally biased toward basic and acidic residues.

As to quaternary structure, homotrimer.

It is found in the cytoplasm. In terms of biological role, capsid protein (CA) is the structural component of the virus-like particle (VLP), forming the shell that encapsulates the retrotransposons dimeric RNA genome. The particles are assembled from trimer-clustered units and there are holes in the capsid shells that allow for the diffusion of macromolecules. CA also has nucleocapsid-like chaperone activity, promoting primer tRNA(i)-Met annealing to the multipartite primer-binding site (PBS), dimerization of Ty1 RNA and initiation of reverse transcription. This is Transposon Ty1-PR3 Gag polyprotein (TY1A-PR3) from Saccharomyces cerevisiae (strain ATCC 204508 / S288c) (Baker's yeast).